The chain runs to 427 residues: Endothelin-1 receptor (427 aa).

Residues 1–20 form the signal peptide; it reads METLCLRASFWLALVGCVIS. Residues 21–80 lie on the Extracellular side of the membrane; that stretch reads DNPERYSTNLSNHVDDFTTFRGTELSFLVTTHQPTNLVLPSNGSMHNYCPQQTKITSAFK. Asn29 and Asn62 each carry an N-linked (GlcNAc...) asparagine glycan. The chain crosses the membrane as a helical span at residues 81 to 102; it reads YINTVISCTIFIVGMVGNATLL. Topologically, residues 103–112 are cytoplasmic; that stretch reads RIIYQNKCMR. A helical transmembrane segment spans residues 113–132; the sequence is NGPNALIASLALGDLIYVVI. At 133–159 the chain is on the extracellular side; that stretch reads DLPINVFKLLAGRWPFDHNDFGVFLCK. Cys158 and Cys239 are joined by a disulfide. Residues 160 to 181 form a helical membrane-spanning segment; it reads LFPFLQKSSVGITVLNLCALSV. The Cytoplasmic segment spans residues 182–205; that stretch reads DRYRAVASWSRVQGIGIPLVTAIE. The helical transmembrane segment at 206–229 threads the bilayer; that stretch reads IVSIWILSFILAIPEAIGFVMVPF. The Extracellular portion of the chain corresponds to 230–256; it reads EYRGEQHKTCMLNATSKFMEFYQDVKD. The chain crosses the membrane as a helical span at residues 257–278; it reads WWLFGFYFCMPLVCTAIFYTLM. Residues 279-306 lie on the Cytoplasmic side of the membrane; sequence TCEMLNRRNGSLRIALSEHLKQRREVAK. A helical transmembrane segment spans residues 307 to 328; sequence TVFCLVVIFALCWFPLHLSRIL. At 329–347 the chain is on the extracellular side; it reads KKTVYNEMDKNRCELLSFL. The chain crosses the membrane as a helical span at residues 348-372; the sequence is LLMDYIGINLATMNSCINPIALYFV. Topologically, residues 373 to 427 are cytoplasmic; sequence SKKFKNCFQSCLCCCCYQSKSLMTSVPMNGTSIQWKNHDQNNHNTDRSSHKDSMN. The disordered stretch occupies residues 406–427; sequence QWKNHDQNNHNTDRSSHKDSMN. The segment covering 408–427 has biased composition (basic and acidic residues); sequence KNHDQNNHNTDRSSHKDSMN. Position 425 is a phosphoserine (Ser425).

It belongs to the G-protein coupled receptor 1 family. Endothelin receptor subfamily. EDNRA sub-subfamily. In terms of assembly, interacts with HDAC7 and KAT5. In terms of tissue distribution, isoform 1, isoform 3 and isoform 4 are expressed in a variety of tissues, with highest levels in the aorta and cerebellum, followed by lung, atrium and cerebral cortex, lower levels in the placenta, kidney, adrenal gland, duodenum, colon, ventricle and liver but no expression in umbilical vein endothelial cells. Within the placenta, isoform 1, isoform 2, isoform 3 and isoform 4 are expressed in the villi and stem villi vessels.

The protein localises to the cell membrane. Receptor for endothelin-1. Mediates its action by association with G proteins that activate a phosphatidylinositol-calcium second messenger system. The rank order of binding affinities for ET-A is: ET1 &gt; ET2 &gt;&gt; ET3. This is Endothelin-1 receptor from Homo sapiens (Human).